The following is a 939-amino-acid chain: MAIEEKQSRFRISDIARELQVSPREVLQFVKQEGGKVASTSSMVGEEMRDMIFGNFSQEKKLVDETRKIRAEKKKRLTRLEEQSRKAYEKEQQLKESLSSAPSPAPAAHTPEPVKEPFVEIPARHEPAVSPAAPAEQPVIAETPQPESPKEEVVATKAPEAEAKPVEQPEKAAETAVEAQPEAQSQQEPGAEESAEASQTLVQTLPDSMKTYEAPQKIGGLTVLGTIDVSSGSDRKKKSRKKSFKENAAELKDEFEGATSGSSEGGEAGRKKVAKAAGEGESTTGGEDASGKKKKGKKKKKVEVDDKVISKNIKSTISGMDDSGSSGSRQKFRKMRRMERERELEEAEAMREAEKSLIKVTEYASPHELAELMGLTAKDIIQKCFTLGKFVTINQRLDKETIELIAMEFGFDIEFTTEVEATTTEEQVDNPEDMKTRPPVVTIMGHVDHGKTSLLDYIRRSNVVAGESGGITQHIGAYEVTVEGDRQITFLDTPGHEAFTAMRARGAQVTDIVILVVAADDSVMPQTIEAINHSKAAGVPIVVALNKIDKPEANVDKIKTQLSEAGVLVEDWGGEYQCQEISAKKGIGISELMEKVLTEAEVRELKGNYSRDIMASGIIVESELDKGKGVVSTVLVQRGFLKVGDPFVAGNSMGKVRALMDERGKRTDEAGPSTPVRVLGFEDMPQSGDVLTVMESDRDARDLAQKRQIIKREHEFRRSTRVKLDSIARQIKEGLKKELSVIIKADTDGSIQALADGLMKIHNEEVKVQLIHQGVGQITETDVLLAAASDAIIIGFRVRPNVNAKRLAEKEDLDVRFYSVIYHVLEDVEKALEGMLSPELHEESLGSIEIRQVFRVPKVGNVGGAYVLDGKVPRDANVRLLRDGVQIYEGQLDSLKRFKDDVKEVDSGYECGLSLKGYDDIKVGDVVEAYKIVEKKRKL.

Residues 81–94 (EEQSRKAYEKEQQL) are compositionally biased toward basic and acidic residues. Disordered regions lie at residues 81-303 (EEQS…KKVE) and 316-337 (TISG…KMRR). Positions 99-108 (SSAPSPAPAA) are enriched in low complexity. Basic and acidic residues-rich tracts occupy residues 112–127 (EPVK…RHEP) and 148–173 (SPKE…EKAA). Positions 178–189 (EAQPEAQSQQEP) are enriched in low complexity. The span at 244-255 (FKENAAELKDEF) shows a compositional bias: basic and acidic residues. Over residues 276–287 (AAGEGESTTGGE) the composition is skewed to low complexity. Over residues 292-301 (KKKKGKKKKK) the composition is skewed to basic residues. Residues 318-328 (SGMDDSGSSGS) show a composition bias toward low complexity. Positions 436–606 (TRPPVVTIMG…LTEAEVRELK (171 aa)) constitute a tr-type G domain. Residues 445–452 (GHVDHGKT) are G1. 445–452 (GHVDHGKT) serves as a coordination point for GTP. Residues 470-474 (GITQH) are G2. Residues 492-495 (DTPG) form a G3 region. GTP contacts are provided by residues 492-496 (DTPGH) and 546-549 (NKID). The tract at residues 546–549 (NKID) is G4. The G5 stretch occupies residues 582–584 (SAK).

This sequence belongs to the TRAFAC class translation factor GTPase superfamily. Classic translation factor GTPase family. IF-2 subfamily.

The protein resides in the cytoplasm. Its function is as follows. One of the essential components for the initiation of protein synthesis. Protects formylmethionyl-tRNA from spontaneous hydrolysis and promotes its binding to the 30S ribosomal subunits. Also involved in the hydrolysis of GTP during the formation of the 70S ribosomal complex. This chain is Translation initiation factor IF-2, found in Chlorobaculum parvum (strain DSM 263 / NCIMB 8327) (Chlorobium vibrioforme subsp. thiosulfatophilum).